The chain runs to 759 residues: TIR domain-containing adapter molecule 1 (759 aa).

Positions 1-153 (MACTGPSLSG…CGWDVLGDLG (153 aa)) are TRIF-NTD. Residues 84–91 (ETPEEPPD) carry the TRAF6-binding motif. Positions 207–210 (LEIS) match the pLxIS motif motif. A Phosphoserine modification is found at Ser-210. Lys-229 participates in a covalent cross-link: Glycyl lysine isopeptide (Lys-Gly) (interchain with G-Cter in ubiquitin). A disordered region spans residues 241–296 (EPAPMGCQEPEEMSWPPSVEAADSPVRPSSPGPGLPEVTTDACPASPHDPPEVPEI). Short sequence motifs (TRAF6-binding) lie at residues 248–255 (QEPEEMSW) and 299–309 (HYPVECTDVPA). Positions 340-426 (LSAQPRPPTP…PEPPPPELES (87 aa)) are disordered. The segment covering 351-365 (VPQTSPSFPSASTSP) has biased composition (low complexity). Pro residues predominate over residues 366–376 (FPSPSTPPEAH). The 161-residue stretch at 430-590 (KFYNFVVLHA…QDARALREQS (161 aa)) folds into the TIR domain. The segment at 549-759 (LLDEHSKIFA…APEDNTRETE (211 aa)) is sufficient to induce apoptosis. Positions 642 to 723 (GQGSLGTPPS…PPARPQSPGL (82 aa)) are disordered. Residues 659–705 (HQPPPLPPWLGGTPPPIFPQPPQTFPQPPPTFPQPPPTFQQPPPACP) are compositionally biased toward pro residues.

Homodimer. Found in a multi-helicase-TICAM1 complex at least composed of DHX36, DDX1, DDX21 and TICAM1; this complex exists in resting cells with or without poly(I:C) RNA ligand stimulation. Interacts (via TIR domain) with DDX21 (via C-terminus). Interacts (via TIR domain) with DHX36 (via C-terminus). Interacts with AZI2 and IRF7. Interacts with TICAM2 in TLR4 recruitment. Interaction with PIAS4 inhibits the TICAM1-induced NF-kappa-B, IRF and IFNB1 activation. Interacts with IKBKB and IKBKE. Interaction with SARM1 blocks TICAM1-dependent transcription factor activation. Interacts with TRAF3. Interacts (when phosphorylated) with IRF3; following activation and phosphorylation on the pLxIS motif by TBK1, recruits IRF3. Interacts with TBK1, TRAF6 and RIPK1 and these interactions are enhanced in the presence of WDFY1. Interacts with TRAFD1. Interacts with UBQLN1 (via UBA domain). Interacts with TLR4 in response to LPS in a WDFY1-dependent manner. Interacts with WDFY1 in response to poly(I:C). Interacts (via the TIR domain) with TLR3 in response to poly(I:C) and this interaction is enhanced in the presence of WDFY1. Interacts with TRIM56. Component of a multi-helicase-TICAM1 complex that acts as a cytoplasmic sensor of viral double-stranded RNA (dsRNA) and plays a role in the activation of a cascade of antiviral responses including the induction of pro-inflammatory cytokines. Interacts (via the TIR domain) with TLR5. Interacts with TRIM8. Interacts with TAX1BP1 and TRIM32; these interactions target TICAM1 to TAX1BP1-mediated selective autophagic degradation. Interacts with DDX50. In terms of processing, phosphorylated by TBK1. Following activation, phosphorylated by TBK1 at Ser-210 in the pLxIS motif. The phosphorylated pLxIS motif constitutes an IRF3-binding motif, leading to recruitment of the transcription factor IRF3 to induce type-I interferons and other cytokines. Polyubiquitinated at Lys-229 by TRIM38 with 'Lys-48'-linked chains, leading to proteasomal degradation. Polyubiquitinated with 'Lys-6' and 'Lys-33'-linked chains in a TRIM8-dependent manner.

It localises to the cytoplasmic vesicle. The protein localises to the autophagosome. Its subcellular location is the cytoplasm. The protein resides in the cytosol. It is found in the mitochondrion. In terms of biological role, involved in innate immunity against invading pathogens. Adapter used by TLR3, TLR4 (through TICAM2) and TLR5 to mediate NF-kappa-B and interferon-regulatory factor (IRF) activation, and to induce apoptosis. Ligand binding to these receptors results in TRIF recruitment through its TIR domain. Distinct protein-interaction motifs allow recruitment of the effector proteins TBK1, TRAF6 and RIPK1, which in turn, lead to the activation of transcription factors IRF3 and IRF7, NF-kappa-B and FADD respectively. Phosphorylation by TBK1 on the pLxIS motif leads to recruitment and subsequent activation of the transcription factor IRF3 to induce expression of type I interferon and exert a potent immunity against invading pathogens. Component of a multi-helicase-TICAM1 complex that acts as a cytoplasmic sensor of viral double-stranded RNA (dsRNA) and plays a role in the activation of a cascade of antiviral responses including the induction of pro-inflammatory cytokines. The chain is TIR domain-containing adapter molecule 1 (TICAM1) from Bos taurus (Bovine).